We begin with the raw amino-acid sequence, 523 residues long: Xanthotoxin 5-hydroxylase CYP82C2 (523 aa).

Residues 1 to 21 (MDTSLFSLFVPILVFVFIALF) form a helical membrane-spanning segment. Cysteine 462 is a binding site for heme.

This sequence belongs to the cytochrome P450 family. It depends on heme as a cofactor.

It localises to the membrane. It carries out the reaction xanthotoxin + reduced [NADPH--hemoprotein reductase] + O2 = 5-hydroxyxanthotoxin + oxidized [NADPH--hemoprotein reductase] + H2O + 2 H(+). The enzyme catalyses indole-3-carbonyl nitrile + reduced [NADPH--hemoprotein reductase] + O2 = 4-hydroxy-indole-3-carbonyl nitrile + oxidized [NADPH--hemoprotein reductase] + H2O + H(+). Its function is as follows. Involved in the biosynthetic pathway to 4-hydroxyindole-3-carbonyl nitrile (4-OH-ICN), a cyanogenic metabolite required for inducible pathogen defense. Converts indole-3-carbonyl nitrile (ICN) into 4-OH-ICN. Can hydroxylate xanthotoxin (8-methoxypsoralen) to form 5-hydroxyxanthotoxin (5-hydroxy-8-methoxypsoralen) in vivo and in vitro. This is Xanthotoxin 5-hydroxylase CYP82C2 from Arabidopsis thaliana (Mouse-ear cress).